The following is a 223-amino-acid chain: Urease accessory protein UreF (223 aa).

It belongs to the UreF family. As to quaternary structure, ureD, UreF and UreG form a complex that acts as a GTP-hydrolysis-dependent molecular chaperone, activating the urease apoprotein by helping to assemble the nickel containing metallocenter of UreC. The UreE protein probably delivers the nickel.

It localises to the cytoplasm. In terms of biological role, required for maturation of urease via the functional incorporation of the urease nickel metallocenter. The chain is Urease accessory protein UreF from Rhizobium meliloti (strain 1021) (Ensifer meliloti).